The primary structure comprises 328 residues: uncharacterized protein (328 aa).

The disordered stretch occupies residues 296 to 328 (APEGDLEDEIIEVDPEQPRDDPYRRLRTPPPGG). Over residues 299-310 (GDLEDEIIEVDP) the composition is skewed to acidic residues.

Possibly necessary for replication. This is an uncharacterized protein from Halobacterium sp. (strain GN101).